Reading from the N-terminus, the 124-residue chain is UPF0231 protein Sama_0645 (124 aa).

This sequence belongs to the UPF0231 family.

In Shewanella amazonensis (strain ATCC BAA-1098 / SB2B), this protein is UPF0231 protein Sama_0645.